The primary structure comprises 140 residues: Small ribosomal subunit protein uS9 (140 aa).

This sequence belongs to the universal ribosomal protein uS9 family.

This is Small ribosomal subunit protein uS9 from Desulfurococcus amylolyticus (strain DSM 18924 / JCM 16383 / VKM B-2413 / 1221n) (Desulfurococcus kamchatkensis).